Reading from the N-terminus, the 428-residue chain is Spliceosome RNA helicase DDX39B (428 aa).

Over residues M1–E19 the composition is skewed to acidic residues. Residues M1 to K32 form a disordered region. A2 carries the N-acetylalanine modification. An N6-acetyllysine; alternate modification is found at K36. Residue K36 forms a Glycyl lysine isopeptide (Lys-Gly) (interchain with G-Cter in SUMO2); alternate linkage. Phosphoserine occurs at positions 38 and 41. The short motif at S45–H73 is the Q motif element. The Helicase ATP-binding domain occupies I76–I249. A89–T96 provides a ligand contact to ATP. Residue T172 is modified to Phosphothreonine. The short motif at D196–D199 is the DECD box element. The Helicase C-terminal domain maps to G261–S422.

The protein belongs to the DEAD box helicase family. DECD subfamily. In terms of assembly, homodimer, and heterodimer with DDX39A. DDX39B interacts with the THO subcomplex to form the THO-DDX39B complex which multimerizes into a 28-subunit tetrameric assembly. Component of the transcription/export (TREX) complex at least composed of ALYREF/THOC4, DDX39B, SARNP/CIP29, CHTOP and the THO subcomplex; in the complex interacts with THOC2. THOC1-THOC2-THOC3-DDX39B subcomplex is sufficient for the interaction with export factor NXF1-NXT1. TREX seems to have a dynamic structure involving ATP-dependent remodeling. Within the TREX complex bridges ALYREF/THOC4 and the THO subcomplex, and, in a ATP-dependent manner, ALYREF/THOC4 and SARNP/CIP29. Component of the spliceosome. Interacts directly with U2AF2. Interacts with RBM8A, RNPS1 and SRRM1, FYTTD1/UIF, THOC1, MX1 and POLDIP3. Interacts with LUZP4. Interacts with SARNP/CIP29 (via the C-terminal domain); the interaction is direct and facilitates RNA binding of DDX39B.

The protein localises to the nucleus. It localises to the nucleus speckle. It is found in the cytoplasm. The enzyme catalyses ATP + H2O = ADP + phosphate + H(+). In terms of biological role, involved in nuclear export of spliced and unspliced mRNA. Component of the TREX complex which is thought to couple mRNA transcription, processing and nuclear export, and specifically associates with spliced mRNA and not with unspliced pre-mRNA. The TREX complex is recruited to spliced mRNAs by a transcription-independent mechanism, binds to mRNA upstream of the exon-junction complex (EJC) and is recruited in a splicing- and cap-dependent manner to a region near the 5' end of the mRNA where it functions in mRNA export to the cytoplasm via the TAP/NXF1 pathway. The THOC1-THOC2-THOC3 core complex alone is sufficient to promote ATPase activity of DDX39B; in the complex THOC2 is the only component that directly interacts with DDX39B. Associates with SARNP/CIP29, which facilitates RNA binding of DDX39B and likely plays a role in mRNA export. May undergo several rounds of ATP hydrolysis during assembly of TREX to drive subsequent loading of components such as ALYREF/THOC4 and CHTOP onto mRNA. Also associates with pre-mRNA independent of ALYREF/THOC4. Involved in the nuclear export of intronless mRNA; the ATP-bound form is proposed to recruit export adapter ALYREF/THOC4 to intronless mRNA; its ATPase activity is cooperatively stimulated by RNA and ALYREF/THOC4 and ATP hydrolysis is thought to trigger the dissociation from RNA to allow the association of ALYREF/THOC4 and the NXF1-NXT1 heterodimer. Involved in transcription elongation and genome stability. Splice factor that is required for the first ATP-dependent step in spliceosome assembly and for the interaction of U2 snRNP with the branchpoint. Has both RNA-stimulated ATP binding/hydrolysis activity and ATP-dependent RNA unwinding activity. Even with the stimulation of RNA, the ATPase activity is weak. Can only hydrolyze ATP but not other NTPs. The RNA stimulation of ATPase activity does not have a strong preference for the sequence and length of the RNA. However, ssRNA stimulates the ATPase activity much more strongly than dsRNA. Can unwind 5' or 3' overhangs or blunt end RNA duplexes in vitro. The ATPase and helicase activities are not influenced by U2AF2; the effect of ALYREF/THOC4 is reported conflictingly. The chain is Spliceosome RNA helicase DDX39B (DDX39B) from Canis lupus familiaris (Dog).